Reading from the N-terminus, the 224-residue chain is Cardosin-E (224 aa).

A Peptidase A1 domain is found at 1 to 221; the sequence is DSGSAIVALT…DYGNLLVGFA (221 aa). The active site involves aspartate 35. An intrachain disulfide couples cysteine 125 to cysteine 129. Aspartate 134 is a catalytic residue.

This sequence belongs to the peptidase A1 family. As to quaternary structure, heterodimer of a light chain and a heavy chain. An intermediate form is produced first, and undergoes proteolytic processing to remove the internal plant-specific insert (PSI) and the propeptide. N-glycosylated. As to expression, pistils.

The protein localises to the microsome membrane. The protein resides in the protein storage vacuole. It localises to the secreted. Its subcellular location is the cell wall. It is found in the extracellular space. The protein localises to the extracellular matrix. Inhibited by pepstatin. Aspartic protease with a high preference for bonds between hydrophobic residues. In Cynara cardunculus (Cardoon), this protein is Cardosin-E.